Reading from the N-terminus, the 414-residue chain is ZP domain-containing protein (414 aa).

Positions 1–17 are cleaved as a signal peptide; that stretch reads MFLYSFVFLMLLGLSSA. Positions 18–65 are disordered; sequence QTESATSPDEVETEPTMSTDQPETSPSMSTETEPTTETPPVTTPPPPD. The Extracellular segment spans residues 18-364; sequence QTESATSPDE…GAQEAVSSLT (347 aa). Over residues 39–57 the composition is skewed to low complexity; sequence PETSPSMSTETEPTTETPP. In terms of domain architecture, ZP spans 70–323; that stretch reads ICTNEKMEVF…SRCAKGCETS (254 aa). A disulfide bridge links Cys-241 with Cys-302. A helical transmembrane segment spans residues 365-385; the sequence is IFAAVAGVLGVIVLFLAVALV. Topologically, residues 386 to 414 are cytoplasmic; it reads MLYKRYRSPQSATRVVYTKTANEEGKLLV.

In terms of tissue distribution, component of the acid-insoluble and acid-soluble organic matrix of the aragonitic skeleton (at protein level).

The protein localises to the membrane. In Acropora millepora (Staghorn coral), this protein is ZP domain-containing protein.